Consider the following 248-residue polypeptide: MRRPIIAGNWKMHMTPSEAVKLVEELIPQVKDAKAEVVVIPPFVDLTEVNKVIQGTNILLGAQDMFWEEKGAYTGEISPLMLKEIGVKYVVIGHSERRQYFGETDEMVNKKVLSALSHGLSPIVCVGESLSQREEGKTFEVVLNQTKEALKGVSHDDIVNVVIAYEPIWAIGTGKTATAKDANEVIKALRNTIASLYGKEKASLVRIQYGGSVKPENISELMAESDIDGALVGGASLVASDFAKIVNY.

9-11 (NWK) is a binding site for substrate. The active-site Electrophile is H94. The Proton acceptor role is filled by E166. Residues G172, S212, and 233–234 (GG) each bind substrate.

The protein belongs to the triosephosphate isomerase family. In terms of assembly, homodimer.

Its subcellular location is the cytoplasm. The enzyme catalyses D-glyceraldehyde 3-phosphate = dihydroxyacetone phosphate. It participates in carbohydrate biosynthesis; gluconeogenesis. It functions in the pathway carbohydrate degradation; glycolysis; D-glyceraldehyde 3-phosphate from glycerone phosphate: step 1/1. Functionally, involved in the gluconeogenesis. Catalyzes stereospecifically the conversion of dihydroxyacetone phosphate (DHAP) to D-glyceraldehyde-3-phosphate (G3P). The protein is Triosephosphate isomerase of Thermoanaerobacter pseudethanolicus (strain ATCC 33223 / 39E) (Clostridium thermohydrosulfuricum).